Consider the following 373-residue polypeptide: CASP-like protein UU6 (373 aa).

Disordered stretches follow at residues 1–100 (MGTL…GSEG) and 172–195 (TKETETTPESSRASDEDAPTPKKK). The Cytoplasmic portion of the chain corresponds to 1–204 (MGTLTDPTVD…KHRLRKHLTA (204 aa)). Residues 56–74 (KTNTGNAAESTASTENGET) are compositionally biased toward polar residues. The helical transmembrane segment at 205 to 225 (IGAYSFAFRFSETVLSLIAIV) threads the bilayer. The Extracellular portion of the chain corresponds to 226–253 (VMCSTRGSMRTDGVDFGTLKFNHFQAYR). Residues 254–274 (YLVAVNVIVFVYSTFQFIQLL) traverse the membrane as a helical segment. Residues 275-276 (YT) are Cytoplasmic-facing. A helical membrane pass occupies residues 277–297 (VILGISFIPSIFISTWMTFGF). Topologically, residues 298–342 (DQLFLYLLLSASTSAATVANMSYTGEMGIQLCSRFDVGSFCSKAD) are extracellular. N317 carries N-linked (GlcNAc...) asparagine glycosylation. Residues 343–363 (VAVTMSFFAVLAMLSSTILAI) form a helical membrane-spanning segment. Residues 364–373 (YRIAVLLREY) lie on the Cytoplasmic side of the membrane.

It belongs to the Casparian strip membrane proteins (CASP) family. In terms of assembly, homodimer and heterodimers.

Its subcellular location is the cell membrane. This is CASP-like protein UU6 from Physcomitrium patens (Spreading-leaved earth moss).